Reading from the N-terminus, the 286-residue chain is Leukocyte cell-derived chemotaxin 1 (286 aa).

Residues 29 to 49 form a helical membrane-spanning segment; that stretch reads LVAFIAGAALLLFGGVGAFYL. The region spanning 75 to 157 is the BRICHOS domain; the sequence is DSAEGTIVEV…FCADLPIYWH (83 aa). Cys102 and Cys149 are oxidised to a cystine. Residues 166-169 constitute a propeptide that is removed on maturation; it reads RKRR. The segment covering 166–176 has biased composition (basic residues); sequence RKRRSATRMRR. Positions 166 to 220 are disordered; it reads RKRRSATRMRRQTSAGVNRQPARRRNSTASARDERPTGPEYNPENPYHQNQGSEG. Asn191 carries an N-linked (GlcNAc...) asparagine glycan. Disulfide bonds link Cys234–Cys238, Cys235–Cys275, Cys245–Cys269, and Cys249–Cys265.

The protein belongs to the chondromodulin-1 family. Post-translationally, after cleavage, the post-translationally modified ChM-I is secreted as a glycoprotein.

Its subcellular location is the secreted. It localises to the extracellular space. The protein localises to the extracellular matrix. It is found in the endomembrane system. In terms of biological role, bifunctional growth regulator. May contribute to the rapid growth of cartilage and vascular invasion prior to the replacement of cartilage by bone during endochondral bone development. Plays a role as antiangiogenic factor in cardiac valves to suppress neovascularization. In Danio rerio (Zebrafish), this protein is Leukocyte cell-derived chemotaxin 1.